The primary structure comprises 299 residues: Recombination-associated protein RdgC (299 aa).

It belongs to the RdgC family.

The protein localises to the cytoplasm. The protein resides in the nucleoid. May be involved in recombination. In Laribacter hongkongensis (strain HLHK9), this protein is Recombination-associated protein RdgC.